The sequence spans 35 residues: Unknown protein 14 from 2D-PAGE (35 aa).

Positions 1–35 (VVXXQTLXDXRGIYGDQGSIGPXXIXGLQGDRDAD) are disordered.

The polypeptide is Unknown protein 14 from 2D-PAGE (Bombyx mori (Silk moth)).